The sequence spans 354 residues: Ornithine cyclodeaminase (354 aa).

L-ornithine is bound by residues Arg53 and Lys77. Residues Thr92, Arg120, 147 to 148, Asp169, Thr209, 232 to 235, Lys239, and Ser300 contribute to the NAD(+) site; these read AQ and VGGD. Arg120 provides a ligand contact to L-ornithine. An L-ornithine-binding site is contributed by Asp235. Catalysis depends on Asp235, which acts as the Proton donor/acceptor. Position 301 (Val301) interacts with L-ornithine.

The protein belongs to the ornithine cyclodeaminase/mu-crystallin family. NAD(+) serves as cofactor.

The enzyme catalyses L-ornithine = L-proline + NH4(+). It participates in amino-acid biosynthesis; L-proline biosynthesis; L-proline from L-ornithine: step 1/1. Is subject to substrate inhibition. Is regulated by L-arginine, which stimulates enzymatic activity at 0.1-1 mM while inhibits activity at higher concentrations, and has pronounced effects on the optima for pH and temperature and on the Km for L-ornithine. Is not inhibited by L-proline. Functionally, catalyzes the conversion of L-ornithine into L-proline with release of ammonia. Is involved in the utilization of nopaline, a catabolic pathway that proceeds through L-arginine and L-ornithine to L-proline. Nopaline is a predominant opine in plant cells transformed with Ti plasmid pTiC58. This chain is Ornithine cyclodeaminase, found in Agrobacterium fabrum (strain C58 / ATCC 33970) (Agrobacterium tumefaciens (strain C58)).